The sequence spans 188 residues: FMN-dependent NADPH-azoreductase (188 aa).

The protein belongs to the azoreductase type 2 family. Homotetramer. The cofactor is FMN.

Functionally, catalyzes the reductive cleavage of azo bond in aromatic azo compounds to the corresponding amines. Requires NADPH, but not NADH, as an electron donor for its activity. The polypeptide is FMN-dependent NADPH-azoreductase (azo1) (Staphylococcus epidermidis (strain ATCC 12228 / FDA PCI 1200)).